The primary structure comprises 522 residues: BTB/POZ domain-containing protein 16 (522 aa).

The BTB domain maps to 166-222 (INDPAVTRVAFALALKNLYMKEVEMTVDNVLGVLASAHILQFNRLFQKCVNMMMNRL).

The chain is BTB/POZ domain-containing protein 16 (Btbd16) from Mus musculus (Mouse).